Reading from the N-terminus, the 255-residue chain is Indole-3-glycerol phosphate synthase (255 aa).

This sequence belongs to the TrpC family.

It carries out the reaction 1-(2-carboxyphenylamino)-1-deoxy-D-ribulose 5-phosphate + H(+) = (1S,2R)-1-C-(indol-3-yl)glycerol 3-phosphate + CO2 + H2O. Its pathway is amino-acid biosynthesis; L-tryptophan biosynthesis; L-tryptophan from chorismate: step 4/5. This Streptococcus gordonii (strain Challis / ATCC 35105 / BCRC 15272 / CH1 / DL1 / V288) protein is Indole-3-glycerol phosphate synthase.